A 274-amino-acid chain; its full sequence is 2,3,4,5-tetrahydropyridine-2,6-dicarboxylate N-succinyltransferase (274 aa).

Residues Arg-104 and Asp-141 each contribute to the substrate site.

It belongs to the transferase hexapeptide repeat family. Homotrimer.

Its subcellular location is the cytoplasm. The enzyme catalyses (S)-2,3,4,5-tetrahydrodipicolinate + succinyl-CoA + H2O = (S)-2-succinylamino-6-oxoheptanedioate + CoA. Its pathway is amino-acid biosynthesis; L-lysine biosynthesis via DAP pathway; LL-2,6-diaminopimelate from (S)-tetrahydrodipicolinate (succinylase route): step 1/3. This chain is 2,3,4,5-tetrahydropyridine-2,6-dicarboxylate N-succinyltransferase, found in Shewanella oneidensis (strain ATCC 700550 / JCM 31522 / CIP 106686 / LMG 19005 / NCIMB 14063 / MR-1).